Here is a 260-residue protein sequence, read N- to C-terminus: Phosphate import ATP-binding protein PstB (260 aa).

Positions 14–255 constitute an ABC transporter domain; that stretch reads LQIRNLDFFY…PGKKQTEDYI (242 aa). Residue 46–53 coordinates ATP; it reads GPSGCGKS.

Belongs to the ABC transporter superfamily. Phosphate importer (TC 3.A.1.7) family. The complex is composed of two ATP-binding proteins (PstB), two transmembrane proteins (PstC and PstA) and a solute-binding protein (PstS).

The protein localises to the cell inner membrane. It catalyses the reaction phosphate(out) + ATP + H2O = ADP + 2 phosphate(in) + H(+). Part of the ABC transporter complex PstSACB involved in phosphate import. Responsible for energy coupling to the transport system. In Thiobacillus denitrificans (strain ATCC 25259 / T1), this protein is Phosphate import ATP-binding protein PstB.